The following is a 278-amino-acid chain: Large ribosomal subunit protein uL2 (278 aa).

Positions 201-278 (HGNINDGKAG…IMRSRHQRKK (78 aa)) are disordered. The span at 210–221 (GRSRWRGKRPHV) shows a compositional bias: basic residues.

Belongs to the universal ribosomal protein uL2 family. As to quaternary structure, part of the 50S ribosomal subunit. Forms a bridge to the 30S subunit in the 70S ribosome.

Its function is as follows. One of the primary rRNA binding proteins. Required for association of the 30S and 50S subunits to form the 70S ribosome, for tRNA binding and peptide bond formation. It has been suggested to have peptidyltransferase activity; this is somewhat controversial. Makes several contacts with the 16S rRNA in the 70S ribosome. The polypeptide is Large ribosomal subunit protein uL2 (Agrobacterium fabrum (strain C58 / ATCC 33970) (Agrobacterium tumefaciens (strain C58))).